A 67-amino-acid polypeptide reads, in one-letter code: Large ribosomal subunit protein eL24 (67 aa).

Positions 7, 10, 33, and 37 each coordinate Zn(2+). The segment at 7 to 37 adopts a C4-type zinc-finger fold; that stretch reads CSYCGKEFEPGTGKMYVRNDGRVYFFCSRKC.

This sequence belongs to the eukaryotic ribosomal protein eL24 family. As to quaternary structure, part of the 50S ribosomal subunit. Forms a cluster with proteins L3 and L14. Zn(2+) is required as a cofactor.

Its function is as follows. Binds to the 23S rRNA. This Thermococcus sibiricus (strain DSM 12597 / MM 739) protein is Large ribosomal subunit protein eL24.